We begin with the raw amino-acid sequence, 36 residues long: Photosystem I reaction center subunit VIII (36 aa).

A helical transmembrane segment spans residues 8 to 28 (SIFVPLVGLVFPAIAMASLFL).

Belongs to the PsaI family.

It is found in the plastid. The protein localises to the chloroplast thylakoid membrane. Functionally, may help in the organization of the PsaL subunit. This Solanum bulbocastanum (Wild potato) protein is Photosystem I reaction center subunit VIII.